The following is a 602-amino-acid chain: Elongation factor 4 (602 aa).

One can recognise a tr-type G domain in the interval 5-187; sequence DHIRNFSIIA…ALVKRIPAPK (183 aa). GTP contacts are provided by residues 17–22 and 134–137; these read DHGKST and NKID.

It belongs to the TRAFAC class translation factor GTPase superfamily. Classic translation factor GTPase family. LepA subfamily.

The protein resides in the cell inner membrane. It carries out the reaction GTP + H2O = GDP + phosphate + H(+). Required for accurate and efficient protein synthesis under certain stress conditions. May act as a fidelity factor of the translation reaction, by catalyzing a one-codon backward translocation of tRNAs on improperly translocated ribosomes. Back-translocation proceeds from a post-translocation (POST) complex to a pre-translocation (PRE) complex, thus giving elongation factor G a second chance to translocate the tRNAs correctly. Binds to ribosomes in a GTP-dependent manner. This Zymomonas mobilis subsp. mobilis (strain ATCC 31821 / ZM4 / CP4) protein is Elongation factor 4.